Reading from the N-terminus, the 52-residue chain is Eukaryotic translation initiation factor 5A (52 aa).

Position 42 is a hypusine (Lys-42).

This sequence belongs to the eIF-5A family. Lys-42 undergoes hypusination, a unique post-translational modification that consists in the addition of a butylamino group from spermidine to lysine side chain, leading to the formation of the unusual amino acid hypusine. eIF-5As are the only known proteins to undergo this modification, which is essential for their function.

It localises to the cytoplasm. Its function is as follows. Translation factor that promotes translation elongation and termination, particularly upon ribosome stalling at specific amino acid sequence contexts. Binds between the exit (E) and peptidyl (P) site of the ribosome and promotes rescue of stalled ribosome: specifically required for efficient translation of polyproline-containing peptides as well as other motifs that stall the ribosome. Acts as a ribosome quality control (RQC) cofactor by joining the RQC complex to facilitate peptidyl transfer during CAT tailing step. The sequence is that of Eukaryotic translation initiation factor 5A from Schistosoma mansoni (Blood fluke).